The chain runs to 297 residues: Protein-L-isoaspartate O-methyltransferase (297 aa).

A disordered region spans residues 20–57 (RKPAPARTAGMPAVGAPGPAQAQAKARDKQPSAPTAAA). Low complexity predominate over residues 28–43 (AGMPAVGAPGPAQAQA). Serine 133 is an active-site residue.

Belongs to the methyltransferase superfamily. L-isoaspartyl/D-aspartyl protein methyltransferase family.

It is found in the cytoplasm. It catalyses the reaction [protein]-L-isoaspartate + S-adenosyl-L-methionine = [protein]-L-isoaspartate alpha-methyl ester + S-adenosyl-L-homocysteine. Its function is as follows. Catalyzes the methyl esterification of L-isoaspartyl residues in peptides and proteins that result from spontaneous decomposition of normal L-aspartyl and L-asparaginyl residues. It plays a role in the repair and/or degradation of damaged proteins. The sequence is that of Protein-L-isoaspartate O-methyltransferase from Cupriavidus pinatubonensis (strain JMP 134 / LMG 1197) (Cupriavidus necator (strain JMP 134)).